Here is a 461-residue protein sequence, read N- to C-terminus: MAPSSQLEFNVVRKQPELLPPAEPTPFEWKELSDIDDQDGLRLHISGFFIYPPSTMSNVGRDNVARDIRLGLSKAMVFYYPLAGRIREGPNRKLSVECTGEGIMYCEADADVRLEQFGDIGALSMPFPFMDKVMFETVDDGILGTPLMYFQSTRFICGGIVIAGCYNHAIADGLGFYMFMAAAAQLARGAASPTPLPVWQRERLLSRVPPRVTFIHHEYIHDTPKTETANPLDNEPWPLHSIFFTRVDVAALRAQLPGHLRKSATSFEIISACLWRCRTAALRFAPDELSRLIIAVNARTKFGPPLPQGYYGNSIMLPMVVSEAGKLVLSGLGYAVELVIEAKGKVTEEYVKSVADYLVLNGRPHYVVTNTYLVSDLRQLVEMSKFDWGWGKPAYVGPADVGENAISFLATLKNGEEEGVVVPIRLPESAVGRFKSEVSKMVSFGCLEDVKPNRDGYLSRM.

Residues H168 and D387 each act as proton acceptor in the active site. Residues 459 to 461 carry the Microbody targeting signal motif; the sequence is SRM.

It belongs to the plant acyltransferase family. As to quaternary structure, monomer. As to expression, confined to immature fruits perisperm. Also detectable in roots.

Its subcellular location is the cytoplasm. The catalysed reaction is piperidine + (E,E)-piperoyl-CoA = piperine + CoA + H(+). It catalyses the reaction pyrrolidine + (E,E)-piperoyl-CoA = piperyline + CoA + H(+). It carries out the reaction (E,E)-piperoyl-CoA + 2-methylpropan-1-amine = (E,E)-piperlonguminine + CoA + H(+). Its pathway is aromatic compound metabolism. In terms of biological role, involved in the biosynthesis of aromatic piperamides natural products such as piperine (1-piperoyl-piperidine), the pungent principle contributing, together with several terpenoids, to the aromatic properties of black pepper fruits, and displaying numerous pharmacological activities such as antiproliferative, antitumor, antiangiogenesis, antioxidant, antidiabetic, antiobesity, cardioprotective, antimicrobial, antiaging, and immunomodulatory effects. Mediates mainly the conversion of piperidine and piperoyl-CoA to piperine. Can also use pyrrolidine and isobutylamine as acceptors and 3,4-methylenedioxycinnamoyl-CoA as an alternative CoA-donor with a lower efficiency. This Piper nigrum (Black pepper) protein is Piperine synthase.